A 35-amino-acid polypeptide reads, in one-letter code: Putative gene 58 protein (35 aa).

This chain is Putative gene 58 protein (58), found in Bacillus phage SP01 (Bacteriophage SP01).